An 859-amino-acid chain; its full sequence is METRSGGSGSASGGGGGGRMRLRKTESAEMRWVVSGGAYEEDEIESSDGGGGTPAAASGSRGGCSDSDDNYEEAEMLRQRLVRTGPRADSLDVEAQDVAGMNRHQEITVGRSIVLAVQTLGVVFGDVGTSPLYAFDVMFNKYPITSKEDVLGALSLVIYTLILIPLLKYTLIALWGNDDGEGGTFALYSLICRNARVSLLPNQLRSDTRISSFQLQVPSVELERSLKIKERLETSSMLKKLLLMLVLFGTSMVIADGVVTPAMSVMSAVNGLKVGISSVNEGEVVMITVAVLIVLFTLQRFGSSKVALAVGPALFIWFCCLAGIGIYNMKTYGSAVLQAFNPMYIYYYFERNPTQAWMSLGGCLLCATGSEAMFADLCYFSVKSVQLTFVFLVLPCLLLGYLGQAAFLMENLTENQQVFFLSIPNQAFWPVVFIAILAAIIASRTMTTAIFSTIKQATALGCFPRLKIIHTSRSFMGQIYIPMMNWFLLVSCLAFVTMFGSINEIGNAYGIAELGVMMMTTVLVTIIMLLIWQINIIVVLCFLTLSLGLELIFFSSVLGSVADGSWVLLVFAAVLYLIMYIWNYGTKLKYETEVKQKLSMDLLMELGCNLGTVRVPGIGLLYNELARGVPGIFGQFLATMPAIHSMIIFVCIKWVPVPVVPQNERFLFRRVCPKSYHMFRCIARYGYKDIRKEDYISFQQLLIESLEKFMRREAQERSLESDQYDGTDSEEEVASASSRALVGPNGSINSLGVPPAEAAGTTEHPTIGSSMSFDGSLDEAIDGRGSLDDELSFIHKAKESGVVYLLGHGDIRARKESFFVKKLVINYFYAFLRRNCRRGIAALSIPPSRMMQVAMQYMV.

The segment covering 1 to 19 (METRSGGSGSASGGGGGGR) has biased composition (gly residues). The interval 1-69 (METRSGGSGS…SRGGCSDSDD (69 aa)) is disordered. Topologically, residues 1-112 (METRSGGSGS…RHQEITVGRS (112 aa)) are cytoplasmic. The span at 54-65 (PAAASGSRGGCS) shows a compositional bias: low complexity. Residues 113–133 (IVLAVQTLGVVFGDVGTSPLY) form a helical membrane-spanning segment. The Extracellular portion of the chain corresponds to 134-155 (AFDVMFNKYPITSKEDVLGALS). Residues 156-176 (LVIYTLILIPLLKYTLIALWG) form a helical membrane-spanning segment. The Cytoplasmic segment spans residues 177-240 (NDDGEGGTFA…RLETSSMLKK (64 aa)). The chain crosses the membrane as a helical span at residues 241 to 261 (LLLMLVLFGTSMVIADGVVTP). At 262-275 (AMSVMSAVNGLKVG) the chain is on the extracellular side. A helical transmembrane segment spans residues 276 to 296 (ISSVNEGEVVMITVAVLIVLF). Residues 297–305 (TLQRFGSSK) are Cytoplasmic-facing. A helical transmembrane segment spans residues 306-326 (VALAVGPALFIWFCCLAGIGI). Residues 327-359 (YNMKTYGSAVLQAFNPMYIYYYFERNPTQAWMS) are Extracellular-facing. The helical transmembrane segment at 360–380 (LGGCLLCATGSEAMFADLCYF) threads the bilayer. Over 381 to 388 (SVKSVQLT) the chain is Cytoplasmic. A helical membrane pass occupies residues 389–409 (FVFLVLPCLLLGYLGQAAFLM). The Extracellular segment spans residues 410-417 (ENLTENQQ). Residue Asn-411 is glycosylated (N-linked (GlcNAc...) asparagine). Residues 418–438 (VFFLSIPNQAFWPVVFIAILA) form a helical membrane-spanning segment. Residues 439–478 (AIIASRTMTTAIFSTIKQATALGCFPRLKIIHTSRSFMGQ) are Cytoplasmic-facing. A helical transmembrane segment spans residues 479-499 (IYIPMMNWFLLVSCLAFVTMF). Topologically, residues 500–508 (GSINEIGNA) are extracellular. The chain crosses the membrane as a helical span at residues 509–531 (YGIAELGVMMMTTVLVTIIMLLI). Topologically, residues 532-535 (WQIN) are cytoplasmic. Residues 536–558 (IIVVLCFLTLSLGLELIFFSSVL) form a helical membrane-spanning segment. The Extracellular portion of the chain corresponds to 559–560 (GS). A helical transmembrane segment spans residues 561 to 581 (VADGSWVLLVFAAVLYLIMYI). At 582–859 (WNYGTKLKYE…MMQVAMQYMV (278 aa)) the chain is on the cytoplasmic side. The segment at 752–772 (GVPPAEAAGTTEHPTIGSSMS) is disordered. Positions 763–772 (EHPTIGSSMS) are enriched in polar residues.

This sequence belongs to the HAK/KUP transporter (TC 2.A.72.3) family.

Its subcellular location is the membrane. In terms of biological role, high-affinity potassium transporter. The chain is Probable potassium transporter 14 (HAK14) from Oryza sativa subsp. japonica (Rice).